A 901-amino-acid chain; its full sequence is Phosphatidylinositol 3-kinase catalytic subunit type 3 (901 aa).

A C2 PI3K-type domain is found at 21–189; it reads LQTNVQVKVA…DLLFKQVTRQ (169 aa). A PIK helical domain is found at 302–527; sequence RHRQVKPNKQ…SKMYQNIQDR (226 aa). The PI3K/PI4K catalytic domain occupies 607 to 886; it reads IPDTASFFKS…QIESSLNAKM (280 aa). The tract at residues 613–619 is G-loop; sequence FFKSEMM. The interval 755 to 763 is catalytic loop; it reads GLGDRHLDN. An activation loop region spans residues 774–795; the sequence is HVDFGFILGRDPKPMPPPMKLT.

The protein belongs to the PI3/PI4-kinase family. In terms of assembly, interacts with bec-1. May interact with dyn-1. Mn(2+) serves as cofactor. In terms of tissue distribution, ubiquitous.

Its subcellular location is the nucleus outer membrane. It localises to the cytoplasm. It is found in the cytoplasmic granule. The protein resides in the cell projection. The protein localises to the phagocytic cup. The catalysed reaction is a 1,2-diacyl-sn-glycero-3-phospho-(1D-myo-inositol) + ATP = a 1,2-diacyl-sn-glycero-3-phospho-(1D-myo-inositol-3-phosphate) + ADP + H(+). Its activity is regulated as follows. Inhibited by wortmannin. Catalytic subunit of the PI3K complex that mediates formation of phosphatidylinositol 3-phosphate. Together with bec-1, mediates the production of phosphatidylinositol 3-phosphate on intracellular vesicles and thereby regulates membrane trafficking. Plays a role in endosome-to-Golgi retrograde transport of mig-14. Involved in clearance of apoptotic cell corpses by phagosomes. Phagosome maturation requires two sequential and non-overlapping pulses of phosphatidylinositol-3-phosphate (PI3P) on the vesicle surface which mediates recruitment of sortins snx-1 and lst-4 and small GTPases rab-5, rab-2 and rab-7, downstream of dynamin dyn-1. The first pulse is initiated by piki-1, then maintained by vps-34 which also produces the second pulse. Required for embryonic development. Together with bec-1, involved in L3/L4 larval molting stage probably by regulating cuticle shedding. Regulates the expansion of the nucleus outer membrane. Involved in the secretion and localization of lrp-1 at the apical surface of hyp7 syncytium. May regulate endocytosis in hypodermal cells. May play a role in the formation of gut granules (a lysosome-related organelle). Plays a role in germ stem cell proliferation during larval development. The sequence is that of Phosphatidylinositol 3-kinase catalytic subunit type 3 from Caenorhabditis elegans.